Here is an 890-residue protein sequence, read N- to C-terminus: Potassium/sodium hyperpolarization-activated cyclic nucleotide-gated channel 1 (890 aa).

The segment at methionine 1–phenylalanine 93 is disordered. Topologically, residues methionine 1–arginine 142 are cytoplasmic. The segment covering asparagine 8–alanine 34 has biased composition (low complexity). Over residues aspartate 62–proline 77 the composition is skewed to gly residues. The helical transmembrane segment at phenylalanine 143–isoleucine 164 threads the bilayer. At threonine 165 to threonine 173 the chain is on the extracellular side. A helical transmembrane segment spans residues proline 174 to phenylalanine 194. Residues arginine 195–methionine 215 lie on the Cytoplasmic side of the membrane. A helical transmembrane segment spans residues asparagine 216–phenylalanine 236. The Extracellular segment spans residues leucine 237–threonine 260. A helical; Voltage-sensor membrane pass occupies residues lysine 261 to tryptophan 281. Topologically, residues glutamate 282–valine 295 are cytoplasmic. A helical membrane pass occupies residues valine 296–leucine 318. Residues valine 319–glutamine 344 are Extracellular-facing. Asparagine 338 is a glycosylation site (N-linked (GlcNAc...) asparagine). Residues tyrosine 345–proline 366 constitute an intramembrane region (pore-forming). Residues cysteine 358 to glycine 362 carry the Selectivity filter motif. Over valine 367 to aspartate 371 the chain is Extracellular. The chain crosses the membrane as a helical span at residues leucine 372–histidine 392. Residues alanine 393 to leucine 890 lie on the Cytoplasmic side of the membrane. 3',5'-cyclic AMP is bound by residues glycine 539, glutamate 540, cysteine 542, arginine 549, threonine 550, arginine 590, and arginine 593. Low complexity-rich tracts occupy residues methionine 644 to serine 691 and glutamine 731 to glutamine 749. 3 disordered regions span residues methionine 644–alanine 692, serine 725–glutamate 796, and methionine 845–leucine 890. The segment covering serine 770–threonine 780 has biased composition (polar residues). Positions arginine 854–alanine 865 are enriched in pro residues. The segment covering aspartate 880–leucine 890 has biased composition (basic and acidic residues).

It belongs to the potassium channel HCN family. As to quaternary structure, homotetramer. Heterotetramer with HCN2. The potassium channel is composed of a homo- or heterotetrameric complex of pore-forming subunits. Interacts with KCNE2. Interacts with the SH3 domain of CSK. Detected in brain, in particular in amygdala and hippocampus, while expression in caudate nucleus, corpus callosum, substantia nigra, subthalamic nucleus and thalamus is very low or not detectable. Detected at very low levels in muscle and pancreas.

Its subcellular location is the cell membrane. It carries out the reaction Na(+)(in) = Na(+)(out). The enzyme catalyses K(+)(in) = K(+)(out). With respect to regulation, activated by cAMP, and at 10-100 times higher concentrations, also by cGMP. cAMP binding promotes tetramerization and formation of an active channel. Compared to other family members, cAMP has less stimulatory effect on HCN1 because part of the molecules already contain bound cAMP and form homotetramers when cAMP levels are low, this inherent tetramerization in HCN1 results in a weaker response to increased cAMP. Inhibited by Cs(1+), zatebradine, capsazepine and ZD7288. In terms of biological role, hyperpolarization-activated ion channel that are permeable to sodium and potassium ions. Displays lower selectivity for K(+) over Na(+) ions. Contributes to the native pacemaker currents in heart (If) and in the generation of the I(h) current which controls neuron excitability. Participates in cerebellar mechanisms of motor learning. May mediate responses to sour stimuli. The chain is Potassium/sodium hyperpolarization-activated cyclic nucleotide-gated channel 1 (HCN1) from Homo sapiens (Human).